The chain runs to 189 residues: Elongation factor P (189 aa).

Belongs to the elongation factor P family.

It is found in the cytoplasm. The protein operates within protein biosynthesis; polypeptide chain elongation. Functionally, involved in peptide bond synthesis. Stimulates efficient translation and peptide-bond synthesis on native or reconstituted 70S ribosomes in vitro. Probably functions indirectly by altering the affinity of the ribosome for aminoacyl-tRNA, thus increasing their reactivity as acceptors for peptidyl transferase. The polypeptide is Elongation factor P (Ehrlichia ruminantium (strain Gardel)).